We begin with the raw amino-acid sequence, 344 residues long: uncharacterized protein (344 aa).

Residues 190–232 (SGKRVRSAKKSGADAARASEGATCDRASSESVSPTARPPAQAS) are disordered.

This is an uncharacterized protein from Treponema pallidum (strain Nichols).